Here is a 357-residue protein sequence, read N- to C-terminus: 3-isopropylmalate dehydrogenase (357 aa).

76–89 (GPQWDTIDPALRPE) provides a ligand contact to NAD(+). 4 residues coordinate substrate: Arg-96, Arg-106, Arg-134, and Asp-224. Mg(2+) contacts are provided by Asp-224, Asp-248, and Asp-252. NAD(+) is bound at residue 282–294 (GSAPDIAGQGIAN).

It belongs to the isocitrate and isopropylmalate dehydrogenases family. LeuB type 1 subfamily. As to quaternary structure, homodimer. It depends on Mg(2+) as a cofactor. The cofactor is Mn(2+).

The protein resides in the cytoplasm. The catalysed reaction is (2R,3S)-3-isopropylmalate + NAD(+) = 4-methyl-2-oxopentanoate + CO2 + NADH. Its pathway is amino-acid biosynthesis; L-leucine biosynthesis; L-leucine from 3-methyl-2-oxobutanoate: step 3/4. Catalyzes the oxidation of 3-carboxy-2-hydroxy-4-methylpentanoate (3-isopropylmalate) to 3-carboxy-4-methyl-2-oxopentanoate. The product decarboxylates to 4-methyl-2 oxopentanoate. This Xanthomonas campestris pv. campestris (strain 8004) protein is 3-isopropylmalate dehydrogenase.